We begin with the raw amino-acid sequence, 80 residues long: Large ribosomal subunit protein uL24 (80 aa).

It belongs to the universal ribosomal protein uL24 family. As to quaternary structure, part of the 50S ribosomal subunit.

In terms of biological role, one of two assembly initiator proteins, it binds directly to the 5'-end of the 23S rRNA, where it nucleates assembly of the 50S subunit. One of the proteins that surrounds the polypeptide exit tunnel on the outside of the subunit. This chain is Large ribosomal subunit protein uL24, found in Chlorobium phaeobacteroides (strain DSM 266 / SMG 266 / 2430).